The chain runs to 259 residues: Type III pantothenate kinase (259 aa).

ATP is bound at residue 6 to 13; it reads DVGNTNCT. 107 to 110 contributes to the substrate binding site; that stretch reads GSDR. D109 serves as the catalytic Proton acceptor. D129 provides a ligand contact to K(+). T132 contacts ATP. Residue T184 coordinates substrate.

Belongs to the type III pantothenate kinase family. In terms of assembly, homodimer. The cofactor is NH4(+). K(+) serves as cofactor.

It localises to the cytoplasm. It catalyses the reaction (R)-pantothenate + ATP = (R)-4'-phosphopantothenate + ADP + H(+). Its pathway is cofactor biosynthesis; coenzyme A biosynthesis; CoA from (R)-pantothenate: step 1/5. In terms of biological role, catalyzes the phosphorylation of pantothenate (Pan), the first step in CoA biosynthesis. The chain is Type III pantothenate kinase from Listeria innocua serovar 6a (strain ATCC BAA-680 / CLIP 11262).